Reading from the N-terminus, the 350-residue chain is DNA polymerase IV (350 aa).

In terms of domain architecture, UmuC spans 6–187 (IIHIDMDAFY…LPVEKIFGIG (182 aa)). Mg(2+)-binding residues include Asp10 and Asp105. The active site involves Glu106.

It belongs to the DNA polymerase type-Y family. As to quaternary structure, monomer. Mg(2+) serves as cofactor.

The protein resides in the cytoplasm. It catalyses the reaction DNA(n) + a 2'-deoxyribonucleoside 5'-triphosphate = DNA(n+1) + diphosphate. In terms of biological role, poorly processive, error-prone DNA polymerase involved in untargeted mutagenesis. Copies undamaged DNA at stalled replication forks, which arise in vivo from mismatched or misaligned primer ends. These misaligned primers can be extended by PolIV. Exhibits no 3'-5' exonuclease (proofreading) activity. May be involved in translesional synthesis, in conjunction with the beta clamp from PolIII. This chain is DNA polymerase IV, found in Protochlamydia amoebophila (strain UWE25).